Here is a 189-residue protein sequence, read N- to C-terminus: UPF0301 protein PST_3956 (189 aa).

The protein belongs to the UPF0301 (AlgH) family.

The protein is UPF0301 protein PST_3956 of Stutzerimonas stutzeri (strain A1501) (Pseudomonas stutzeri).